The sequence spans 164 residues: uncharacterized protein (164 aa).

In terms of domain architecture, RDD spans 26-158; that stretch reads YAGFWVRFWA…DYIADTTVVH (133 aa). 2 consecutive transmembrane segments (helical) span residues 35 to 55 and 66 to 86; these read AFLL…SPLF and MFTF…YFAL.

The protein resides in the cell membrane. This is an uncharacterized protein from Bacillus subtilis (strain 168).